The primary structure comprises 371 residues: Mannonate dehydratase (371 aa).

It belongs to the mannonate dehydratase family. It depends on Fe(2+) as a cofactor. Requires Mn(2+) as cofactor.

It catalyses the reaction D-mannonate = 2-dehydro-3-deoxy-D-gluconate + H2O. It participates in carbohydrate metabolism; pentose and glucuronate interconversion. Catalyzes the dehydration of D-mannonate. This is Mannonate dehydratase from Geobacillus thermodenitrificans (strain NG80-2).